The primary structure comprises 847 residues: Guanine nucleotide exchange factor VAV3 (847 aa).

The 119-residue stretch at 1–119 folds into the Calponin-homology (CH) domain; sequence MEPWKQCAQW…ETLSRLSRTP (119 aa). Residue Tyr-141 is modified to Phosphotyrosine. In terms of domain architecture, DH spans 192–371; it reads IRSCCLAEIK…KDLAQYVNEV (180 aa). One can recognise a PH domain in the interval 400 to 502; sequence RPQGDGEIRI…WLEQFEMALS (103 aa). The segment at 513-562 adopts a Phorbol-ester/DAG-type zinc-finger fold; that stretch reads FHDFKMHTFTRVTSCKVCQMLLRGTFYQGYLCFKCGARAHKECLGRVDNC. The interval 560–847 is sufficient for interaction with ROS1; the sequence is DNCGRVNSGE…FPSTYVEEDE (288 aa). The SH3 1 domain maps to 592–660; the sequence is PGLPKMQVIR…PSDAVKPCPC (69 aa). The SH2 domain maps to 672-766; that stretch reads WYAGAMERLQ…TLDTTLQFPY (95 aa). The SH3 2 domain occupies 788–847; that stretch reads KVLGIAIARYDFCARDMRELSLLKGDVVKIYTKMSANGWWRGEVNGRVGWFPSTYVEEDE.

Interacts with the PH domain of SH2B2. Interacts (via SH2 domains) with the phosphorylated form of EPHA2. Interacts with ROS1; constitutive interaction that mediates VAV3 phosphorylation. Post-translationally, phosphorylated. Phosphorylation can be mediated by ROS1. In osteoclasts, undergoes tyrosine phosphorylation in response to CSF1. In terms of tissue distribution, isoform 1 and isoform 3 are widely expressed; both are expressed at very low levels in skeletal muscle. In keratinocytes, isoform 1 is less abundant than isoform 3. Isoform 3 is detected at very low levels, if any, in adrenal gland, bone marrow, spleen, fetal brain and spinal cord; in these tissues, isoform 1 is readily detectable.

In terms of biological role, exchange factor for GTP-binding proteins RhoA, RhoG and, to a lesser extent, Rac1. Binds physically to the nucleotide-free states of those GTPases. Plays an important role in angiogenesis. Its recruitment by phosphorylated EPHA2 is critical for EFNA1-induced RAC1 GTPase activation and vascular endothelial cell migration and assembly. May be important for integrin-mediated signaling, at least in some cell types. In osteoclasts, along with SYK tyrosine kinase, required for signaling through integrin alpha-v/beta-1 (ITAGV-ITGB1), a crucial event for osteoclast proper cytoskeleton organization and function. This signaling pathway involves RAC1, but not RHO, activation. Necessary for proper wound healing. In the course of wound healing, required for the phagocytotic cup formation preceding macrophage phagocytosis of apoptotic neutrophils. Responsible for integrin beta-2 (ITGB2)-mediated macrophage adhesion and, to a lesser extent, contributes to beta-3 (ITGB3)-mediated adhesion. Does not affect integrin beta-1 (ITGB1)-mediated adhesion. The sequence is that of Guanine nucleotide exchange factor VAV3 (VAV3) from Homo sapiens (Human).